A 282-amino-acid polypeptide reads, in one-letter code: 4-hydroxybenzoate octaprenyltransferase (282 aa).

The next 9 helical transmembrane spans lie at 17–37 (IGIL…NQGF), 40–60 (IDLL…GCVI), 90–110 (AFIL…KLPI), 113–133 (FYFA…KRFL), 135–155 (APQL…FIAS), 163–183 (FIVL…MYAM), 207–227 (LIIA…AINK), 231–251 (WFFY…LKLI), and 262–282 (AFLV…LALI).

This sequence belongs to the UbiA prenyltransferase family. Mg(2+) is required as a cofactor.

The protein resides in the cell inner membrane. The catalysed reaction is all-trans-octaprenyl diphosphate + 4-hydroxybenzoate = 4-hydroxy-3-(all-trans-octaprenyl)benzoate + diphosphate. It functions in the pathway cofactor biosynthesis; ubiquinone biosynthesis. Functionally, catalyzes the prenylation of para-hydroxybenzoate (PHB) with an all-trans polyprenyl group. Mediates the second step in the final reaction sequence of ubiquinone-8 (UQ-8) biosynthesis, which is the condensation of the polyisoprenoid side chain with PHB, generating the first membrane-bound Q intermediate 3-octaprenyl-4-hydroxybenzoate. The protein is 4-hydroxybenzoate octaprenyltransferase of Legionella pneumophila subsp. pneumophila (strain Philadelphia 1 / ATCC 33152 / DSM 7513).